Consider the following 141-residue polypeptide: Pheromone-binding protein-related protein 6 (141 aa).

An N-terminal signal peptide occupies residues 1-16; the sequence is MVKYPLILLLIGCAAA. Intrachain disulfides connect C41–C72, C68–C120, and C111–C129.

Belongs to the PBP/GOBP family. As to expression, antenna. Mostly expressed in two types of sensory hairs, sensilla trichodea and small sensilla basiconica, in the ventro-lateral region of the third antennal segment (at protein level).

The protein localises to the secreted. The sequence is that of Pheromone-binding protein-related protein 6 (Obp83b) from Drosophila melanogaster (Fruit fly).